A 782-amino-acid chain; its full sequence is Pyridoxal-dependent decarboxylase domain-containing protein 1 (782 aa).

A compositionally biased stretch (basic and acidic residues) spans 26–48; the sequence is ILEDNQRPSEEEKDGKKYTRKDI. Disordered stretches follow at residues 26–56, 673–695, 702–721, and 726–782; these read ILEDNQRPSEEEKDGKKYTRKDIPGPLQGSG, QTTGLTPPPTPTSAHGKRQAGQK, RNSDAMSETSSISHLEEVES, and PMPE…DSLR. Polar residues-rich tracts occupy residues 703-714 and 747-782; these read NSDAMSETSSIS and AEQSSTPSIVPTETSSEGSQEPSIPSANTAESDSLR.

The protein belongs to the group II decarboxylase family. Pyridoxal 5'-phosphate serves as cofactor.

In Xenopus laevis (African clawed frog), this protein is Pyridoxal-dependent decarboxylase domain-containing protein 1 (pdxdc1).